The following is a 226-amino-acid chain: Late protein I226R (226 aa).

The signal sequence occupies residues 1 to 16 (MKMETFLVCLFHNADG). N-linked (GlcNAc...) asparagine; by host glycosylation is found at asparagine 142 and asparagine 164.

This sequence belongs to the asfivirus I226R family.

Its function is as follows. Plays a role in the inhibition of host NF-kappa-B and IRF3 signaling pathways. Mechanistically, promotes the degradation of host IKBKG through enhancing its ubiquitination leading to inhibition of both pathways. The polypeptide is Late protein I226R (Ornithodoros (relapsing fever ticks)).